We begin with the raw amino-acid sequence, 266 residues long: Undecaprenyl-diphosphatase (266 aa).

7 consecutive transmembrane segments (helical) span residues 41–61 (NLAFTIVVHVATVFSTLVVLW), 80–100 (TKYVINILISMIPIGIVGVFF), 107–127 (IFGSGLLVVGCMLLLTAALLA), 140–160 (ISMKDAFIIGLAQACAVMPGL), 180–200 (LAQFSFLMVIPPILGEALLDV), 213–233 (IPALSLAVGFMAAFVSGCVAC), and 245–265 (LIYFAIYCAIAGLVTIACTLL).

The protein belongs to the UppP family.

It localises to the cell inner membrane. The catalysed reaction is di-trans,octa-cis-undecaprenyl diphosphate + H2O = di-trans,octa-cis-undecaprenyl phosphate + phosphate + H(+). In terms of biological role, catalyzes the dephosphorylation of undecaprenyl diphosphate (UPP). Confers resistance to bacitracin. The protein is Undecaprenyl-diphosphatase of Parabacteroides distasonis (strain ATCC 8503 / DSM 20701 / CIP 104284 / JCM 5825 / NCTC 11152).